The chain runs to 186 residues: Tumor necrosis factor, alpha-induced protein 8-like protein 2 A (186 aa).

It belongs to the TNFAIP8 family. TNFAIP8L2 subfamily.

Its function is as follows. Acts as a negative regulator of innate and adaptive immunity by maintaining immune homeostasis. Negative regulator of Toll-like receptor and T-cell receptor function. Prevents hyperresponsiveness of the immune system and maintains immune homeostasis. Inhibits jun/ap1 and NF-kappa-B activation. Promotes Fas-induced apoptosis. This chain is Tumor necrosis factor, alpha-induced protein 8-like protein 2 A (tnfaip8l2a), found in Danio rerio (Zebrafish).